A 456-amino-acid chain; its full sequence is Signal transduction histidine-protein kinase ArlS (456 aa).

Helical transmembrane passes span 13–33 and 157–177; these read LITT…IIFF and IVAL…SYIF. The 54-residue stretch at 179 to 232 folds into the HAMP domain; sequence SQITKPIVTMSNKMNQIRRDGFQNKLELTTNYEETDNLIDTFNEMMYQIEESFN. One can recognise a Histidine kinase domain in the interval 240 to 456; the sequence is DASHELRTPL…TFKISFPVLN (217 aa). His-243 is modified (phosphohistidine; by autocatalysis).

In terms of processing, autophosphorylated.

It localises to the cell membrane. The catalysed reaction is ATP + protein L-histidine = ADP + protein N-phospho-L-histidine.. In terms of biological role, member of the two-component regulatory system ArlS/ArlR. ArlS probably functions as a sensor protein kinase which is autophosphorylated at a histidine residue and transfers its phosphate group to ArlR. This Staphylococcus epidermidis (strain ATCC 35984 / DSM 28319 / BCRC 17069 / CCUG 31568 / BM 3577 / RP62A) protein is Signal transduction histidine-protein kinase ArlS (arlS).